Here is a 143-residue protein sequence, read N- to C-terminus: MFMGEYQHNIDIKGRLIVPAKFRELLGDNFVITRGLDKCLFAYPQEEWKKLEEKLQTLPLTKKDARSFTRFFFSGASECELDKQGRINIPSNLLQYADLEKETVIIGVSSRIEIWSKSEWDDVFNEAEESFADLAENMIGFDI.

SpoVT-AbrB domains follow at residues 5–47 (EYQH…PQEE) and 76–119 (ASEC…SKSE).

Belongs to the MraZ family. Forms oligomers.

It localises to the cytoplasm. The protein resides in the nucleoid. In Listeria monocytogenes serotype 4b (strain CLIP80459), this protein is Transcriptional regulator MraZ.